A 352-amino-acid chain; its full sequence is S-adenosylmethionine:tRNA ribosyltransferase-isomerase (352 aa).

This sequence belongs to the QueA family. In terms of assembly, monomer.

The protein resides in the cytoplasm. It carries out the reaction 7-aminomethyl-7-carbaguanosine(34) in tRNA + S-adenosyl-L-methionine = epoxyqueuosine(34) in tRNA + adenine + L-methionine + 2 H(+). The protein operates within tRNA modification; tRNA-queuosine biosynthesis. In terms of biological role, transfers and isomerizes the ribose moiety from AdoMet to the 7-aminomethyl group of 7-deazaguanine (preQ1-tRNA) to give epoxyqueuosine (oQ-tRNA). In Allorhizobium ampelinum (strain ATCC BAA-846 / DSM 112012 / S4) (Agrobacterium vitis (strain S4)), this protein is S-adenosylmethionine:tRNA ribosyltransferase-isomerase.